Reading from the N-terminus, the 666-residue chain is Probable potassium transport system protein Kup (666 aa).

The next 12 helical transmembrane spans lie at 16–36, 58–78, 100–120, 141–161, 165–185, 221–241, 253–273, 292–312, 343–363, 373–393, 399–419, and 424–444; these read GFII…LYTM, ISLI…LIAL, PWLI…GALT, IYQN…VLFG, FGTG…FSFL, IFIL…YSDL, WPFV…WILA, LTVY…QALI, LYIP…VLYF, YGLA…YYLI, PFLA…FFWA, and FMHG…VMFI.

Belongs to the HAK/KUP transporter (TC 2.A.72) family.

Its subcellular location is the cell membrane. The enzyme catalyses K(+)(in) + H(+)(in) = K(+)(out) + H(+)(out). Transport of potassium into the cell. Likely operates as a K(+):H(+) symporter. The polypeptide is Probable potassium transport system protein Kup (Streptococcus pyogenes serotype M5 (strain Manfredo)).